The chain runs to 366 residues: Anhydro-N-acetylmuramic acid kinase (366 aa).

Residue 10-17 (GTSMDGID) coordinates ATP.

This sequence belongs to the anhydro-N-acetylmuramic acid kinase family.

The enzyme catalyses 1,6-anhydro-N-acetyl-beta-muramate + ATP + H2O = N-acetyl-D-muramate 6-phosphate + ADP + H(+). The protein operates within amino-sugar metabolism; 1,6-anhydro-N-acetylmuramate degradation. Its pathway is cell wall biogenesis; peptidoglycan recycling. Catalyzes the specific phosphorylation of 1,6-anhydro-N-acetylmuramic acid (anhMurNAc) with the simultaneous cleavage of the 1,6-anhydro ring, generating MurNAc-6-P. Is required for the utilization of anhMurNAc either imported from the medium or derived from its own cell wall murein, and thus plays a role in cell wall recycling. The chain is Anhydro-N-acetylmuramic acid kinase from Legionella pneumophila (strain Paris).